Here is a 171-residue protein sequence, read N- to C-terminus: Probable deoxyuridine 5'-triphosphate nucleotidohydrolase (171 aa).

Belongs to the dCTP deaminase family. Archaeal dUTPase subfamily.

The enzyme catalyses dUTP + H2O = dUMP + diphosphate + H(+). Its pathway is pyrimidine metabolism; dUMP biosynthesis; dUMP from dCTP (dUTP route): step 2/2. Its function is as follows. This enzyme is involved in nucleotide metabolism: it produces dUMP, the immediate precursor of thymidine nucleotides and it decreases the intracellular concentration of dUTP so that uracil cannot be incorporated into DNA. In Methanosarcina acetivorans (strain ATCC 35395 / DSM 2834 / JCM 12185 / C2A), this protein is Probable deoxyuridine 5'-triphosphate nucleotidohydrolase.